We begin with the raw amino-acid sequence, 466 residues long: Hepatocyte nuclear factor 3-alpha (466 aa).

A DNA-binding region (fork-head) is located at residues 169–260 (AKPPYSYISL…GNMFENGCYL (92 aa)). Residues 251–288 (GNMFENGCYLRRQKRFKCEKQPGAGGGSGGGGSKGVPE) form an essential for DNA binding region. Positions 269–358 (EKQPGAGGGS…ASSSAPPISS (90 aa)) are disordered. Positions 273-284 (GAGGGSGGGGSK) are enriched in gly residues. Phosphoserine occurs at positions 303 and 327. 2 stretches are compositionally biased toward low complexity: residues 318–328 (GAPAPGPAASP) and 344–358 (ELKS…PISS).

In terms of assembly, binds DNA as a monomer. Interacts with FOXA2. Interacts with NKX2-1. Interacts with HDAC7. Interacts with the histone H3-H4 heterodimer. Associates with nucleosomes containing histone H2A. Interacts with AR. Interacts with NR0B2. As to expression, liver.

Its subcellular location is the nucleus. Functionally, transcription factor that is involved in embryonic development, establishment of tissue-specific gene expression and regulation of gene expression in differentiated tissues. Is thought to act as a 'pioneer' factor opening the compacted chromatin for other proteins through interactions with nucleosomal core histones and thereby replacing linker histones at target enhancer and/or promoter sites. Binds DNA with the consensus sequence 5'-[AC]A[AT]T[AG]TT[GT][AG][CT]T[CT]-3'. Proposed to play a role in translating the epigenetic signatures into cell type-specific enhancer-driven transcriptional programs. Involved in glucose homeostasis; activates the GCG promoter. Involved in the development of multiple endoderm-derived organ systems such as the liver, pancreas, lungs and prostate; FOXA1 and FOXA2 seem to have at least in part redundant roles. Modulates the transcriptional activity of nuclear hormone receptors. Is required for maximal gene activation mediated by AR in the prostate. Negatively regulates AR transactivation via competition with coactivators such as NCOA2. Is involved in ESR1-mediated transcription. Involved in regulation of apoptosis. Involved in cell cycle regulation. Originally described as a transcription activator for a number of liver genes such as AFP, albumin, tyrosine aminotransferase, PEPCK, etc. Interacts with the cis-acting regulatory regions of these genes. The chain is Hepatocyte nuclear factor 3-alpha (Foxa1) from Rattus norvegicus (Rat).